A 104-amino-acid chain; its full sequence is Replication restart protein PriB (104 aa).

One can recognise an SSB domain in the interval 1–101; it reads MTNRLELSGI…LHAEQIELID (101 aa).

Belongs to the PriB family. In terms of assembly, homodimer. Interacts with DnaT. Interacts with PriA. Component of the replication restart primosome. Primosome assembly occurs via a 'hand-off' mechanism. PriA binds to replication forks, subsequently PriB then DnaT bind; DnaT then displaces ssDNA to generate the helicase loading substrate.

Involved in the restart of stalled replication forks, which reloads the replicative helicase on sites far from the origin of replication; the PriA-PriB pathway is the major replication restart pathway. During primosome assembly it facilitates complex formation between PriA and DnaT on DNA; stabilizes PriA on DNA. Stimulates the DNA unwinding activity of PriA helicase. Its function is as follows. Binds single-stranded (ss)DNA at the primosome assembly site (PAS). One study finds it binds 15 nucleotide (nt) ssDNA. Another study finds the minimal ssDNA length for binding to PriB is 25 nt; prefers dT(30) over dA(30). Also binds 22 nt dsDNA. This chain is Replication restart protein PriB, found in Klebsiella pneumoniae subsp. pneumoniae (strain ATCC 700721 / MGH 78578).